The following is a 922-amino-acid chain: Translation initiation factor IF-2 (922 aa).

The segment at 33–310 (KTASSTVQPP…SKRQKRNEYE (278 aa)) is disordered. Residues 75 to 87 (PAAKAAPKAAAKP) are compositionally biased toward low complexity. Pro residues-rich tracts occupy residues 88-98 (GPKPGPKPGPQ) and 140-150 (TPKPGAKPGPK). 2 stretches are compositionally biased toward low complexity: residues 151–169 (PGGA…GRAP) and 202–211 (PGSRPGGAKK). Composition is skewed to gly residues over residues 215–225 (KPGGAKQGGGR) and 248–292 (FGGG…GRPG). Residues 296–305 (RKGRKSKRQK) show a composition bias toward basic residues. One can recognise a tr-type G domain in the interval 418 to 590 (QRPPVVTVMG…VLLTADASLD (173 aa)). The G1 stretch occupies residues 427–434 (GHVDHGKT). 427–434 (GHVDHGKT) serves as a coordination point for GTP. Positions 452 to 456 (GITQH) are G2. Positions 477–480 (DTPG) are G3. GTP contacts are provided by residues 477-481 (DTPGH) and 531-534 (NKID). The segment at 531-534 (NKID) is G4. The G5 stretch occupies residues 567–569 (SAK).

This sequence belongs to the TRAFAC class translation factor GTPase superfamily. Classic translation factor GTPase family. IF-2 subfamily.

Its subcellular location is the cytoplasm. One of the essential components for the initiation of protein synthesis. Protects formylmethionyl-tRNA from spontaneous hydrolysis and promotes its binding to the 30S ribosomal subunits. Also involved in the hydrolysis of GTP during the formation of the 70S ribosomal complex. The sequence is that of Translation initiation factor IF-2 from Corynebacterium jeikeium (strain K411).